A 245-amino-acid polypeptide reads, in one-letter code: 1-(5-phosphoribosyl)-5-[(5-phosphoribosylamino)methylideneamino] imidazole-4-carboxamide isomerase (245 aa).

The active-site Proton acceptor is the aspartate 8. The Proton donor role is filled by aspartate 129.

Belongs to the HisA/HisF family.

It is found in the cytoplasm. The enzyme catalyses 1-(5-phospho-beta-D-ribosyl)-5-[(5-phospho-beta-D-ribosylamino)methylideneamino]imidazole-4-carboxamide = 5-[(5-phospho-1-deoxy-D-ribulos-1-ylimino)methylamino]-1-(5-phospho-beta-D-ribosyl)imidazole-4-carboxamide. The protein operates within amino-acid biosynthesis; L-histidine biosynthesis; L-histidine from 5-phospho-alpha-D-ribose 1-diphosphate: step 4/9. This chain is 1-(5-phosphoribosyl)-5-[(5-phosphoribosylamino)methylideneamino] imidazole-4-carboxamide isomerase, found in Sinorhizobium fredii (strain NBRC 101917 / NGR234).